A 1142-amino-acid polypeptide reads, in one-letter code: Protein lin-25 (1142 aa).

Residues 600–613 (IEEEIEEEEEDIEP) show a composition bias toward acidic residues. Residues 600–706 (IEEEIEEEEE…EKPKEPLEPT (107 aa)) form a disordered region. Basic and acidic residues-rich tracts occupy residues 614-627 (EVVK…TEKE), 652-662 (DEQKTEEKMDT), and 679-703 (DPPK…KEPL).

The protein resides in the nucleus. It localises to the cytoplasm. Functionally, participates in the inductive signaling pathway downstream of let-60 Ras and the RAF/MAP kinase cascade to regulate specification and differentiation of many cell types. Positively regulates the fate of vulval precursor cells. Required for induction of the P12 and excretory duct cell fates. In males, it is also required for proper formation of spicules. Does not function in the signaling pathway that promotes exit from pachytene. The protein is Protein lin-25 of Caenorhabditis briggsae.